The chain runs to 527 residues: MVVLAAAIVVKSGKVIVSRHYVDMSRIRIEGLLAAFPKLVGMGKQHTYIETENVRYVYQPIEALFLLLVTTKQSNILEDLATLTLLSKLVPEYSMSLDEEGISRASFELIFAFDEVISLGHKESVTVAQVKQYCEMESHEEKLHKLVMQSKINDTKDVMKRKANEIDKSKIEKNKPGGFSSMGSMGSGRLESGFNELSISSGGGGGYGSGSGFGMISDVDPINTKPKDRSRSSVTAPPKSSGMKLGKSGKNQLMESLKAEGEDVIEDVKPTGQSKAAAPPPTDPFTLTVEEKLNVALRRDGGLSSFDMQGTLSLQILNQEDGFVQVQIATGENPEILFKTHPNINRDMFNNENILGLKRPDQPFPTGQGGDGVGLLRWRMQRADESMVPLTINCWPSVSGNETYVSLEYEASSMFDLTNVIISVPLPALREAPSVRQCDGEWRYDPRNSVLEWSILLIDNSNRSGSMEFVVPPVDSSVFFPISVQFAATSTYSGLKVTGMIPLRGGGGATPRFVQRTQLIAQNYQVI.

The segment covering 166 to 175 (IDKSKIEKNK) has biased composition (basic and acidic residues). Disordered regions lie at residues 166–187 (IDKS…SMGS) and 217–250 (SDVD…KSGK). 2 stretches are compositionally biased toward low complexity: residues 177 to 187 (GGFSSMGSMGS) and 239 to 250 (KSSGMKLGKSGK). The region spanning 282-527 (TDPFTLTVEE…QLIAQNYQVI (246 aa)) is the MHD domain.

The protein belongs to the adaptor complexes medium subunit family. Delta-COP subfamily. As to quaternary structure, oligomeric complex that consists of at least the alpha, beta, beta', gamma, delta, epsilon and zeta subunits.

It localises to the cytoplasm. Its subcellular location is the golgi apparatus membrane. It is found in the cytoplasmic vesicle. The protein localises to the COPI-coated vesicle membrane. Functionally, the coatomer is a cytosolic protein complex that binds to dilysine motifs and reversibly associates with Golgi non-clathrin-coated vesicles, which further mediate biosynthetic protein transport from the ER, via the Golgi up to the trans Golgi network. Coatomer complex is required for budding from Golgi membranes, and is essential for the retrograde Golgi-to-ER transport of dilysine-tagged proteins. This chain is Coatomer subunit delta, found in Arabidopsis thaliana (Mouse-ear cress).